The chain runs to 342 residues: uncharacterized protein (342 aa).

Arg-69 contributes to the substrate binding site. Residue His-176 is the Proton donor of the active site. A substrate-binding site is contributed by Asp-240.

This sequence belongs to the aldose epimerase family.

This is an uncharacterized protein from Saccharomyces cerevisiae (strain ATCC 204508 / S288c) (Baker's yeast).